The primary structure comprises 333 residues: Nucleoid-associated protein VV1_3120 (333 aa).

It belongs to the YejK family.

The protein resides in the cytoplasm. It localises to the nucleoid. This Vibrio vulnificus (strain CMCP6) protein is Nucleoid-associated protein VV1_3120.